We begin with the raw amino-acid sequence, 180 residues long: MVSFCCEVCQDIIKKPKLDQHRSRCHGAYFTCIDCNTTFERTDYRNHTSCMTEAQRYQKGLYRPTKKELKKAKMNGNAVNSKELSPNTDNQNTPAGPTKHSLDENEKDKENKKSKKETVSSPAEQLLALTQNQEISLYKLLKKYNKQASKEDSLDSKEVLKHLAITADAKGNYLVKPITK.

2 consecutive C2HC LYAR-type zinc fingers follow at residues 1-26 (MVSF…SRCH) and 27-51 (GAYF…TSCM). Zn(2+) contacts are provided by cysteine 6, cysteine 9, histidine 21, cysteine 25, cysteine 32, cysteine 35, histidine 47, and cysteine 50. The segment at 61-125 (LYRPTKKELK…KETVSSPAEQ (65 aa)) is disordered. The span at 77–95 (NAVNSKELSPNTDNQNTPA) shows a compositional bias: polar residues. Position 85 is a phosphoserine (serine 85). Over residues 100-111 (HSLDENEKDKEN) the composition is skewed to basic and acidic residues.

The protein belongs to the UPF0743 family.

The protein localises to the nucleus. The chain is UPF0743 protein C215.06c from Schizosaccharomyces pombe (strain 972 / ATCC 24843) (Fission yeast).